The sequence spans 191 residues: Calcium-binding protein CML42 (191 aa).

EF-hand domains lie at 25-60, 116-151, and 154-189; these read LNAL…LGLN, ENES…LGLP, and GEME…VVIP. Residues Asp38, Asn40, Asp42, Glu49, Asp129, Asn131, Asp133, Glu140, Asp167, Asn169, Asp171, Arg173, and Glu178 each coordinate Ca(2+).

Interacts with KIC. Expressed in seedling shoots, roots, rosette leaves and flowers. Expressed in the leaf trichome support cells.

Functionally, probable calcium sensor that binds calcium in vitro. Involved in the regulation of trichome branching. The chain is Calcium-binding protein CML42 (CML42) from Arabidopsis thaliana (Mouse-ear cress).